The sequence spans 121 residues: MKKVLALMVAATLGLSSVAFAADTTATATPAATSTTATVAAQTKATQHQKHKVTKKTTEQKAQAAKKHEKKASVQKAPVQKAQAAKKHVKKASVQKAPVQKAQAAKKHHKTAKKPVAAPAA.

A signal peptide spans 1–21 (MKKVLALMVAATLGLSSVAFA). Residues 22–63 (ADTTATATPAATSTTATVAAQTKATQHQKHKVTKKTTEQKAQ) constitute a propeptide that is removed on maturation. Residues 40 to 121 (AAQTKATQHQ…AKKPVAAPAA (82 aa)) are disordered. Positions 74–83 (VQKAPVQKAQ) are enriched in low complexity. Residues 84–93 (AAKKHVKKAS) show a composition bias toward basic residues. Positions 94 to 103 (VQKAPVQKAQ) are enriched in low complexity. A compositionally biased stretch (basic residues) spans 104 to 113 (AAKKHHKTAK).

This sequence belongs to the Asr family. Post-translationally, proteolytic processing gives rise to the active protein.

It localises to the periplasm. Its function is as follows. Required for growth and/or survival at acidic conditions. The chain is Acid shock protein from Yersinia pseudotuberculosis serotype O:1b (strain IP 31758).